The chain runs to 239 residues: Pyridoxine 5'-phosphate synthase (239 aa).

N7 provides a ligand contact to 3-amino-2-oxopropyl phosphate. 9 to 10 is a 1-deoxy-D-xylulose 5-phosphate binding site; it reads DH. Position 18 (R18) interacts with 3-amino-2-oxopropyl phosphate. H43 serves as the catalytic Proton acceptor. Residues R45 and H50 each contribute to the 1-deoxy-D-xylulose 5-phosphate site. E70 acts as the Proton acceptor in catalysis. Residue T100 coordinates 1-deoxy-D-xylulose 5-phosphate. The active-site Proton donor is the H191. 3-amino-2-oxopropyl phosphate-binding positions include G192 and 213-214; that span reads GH.

The protein belongs to the PNP synthase family. In terms of assembly, homooctamer; tetramer of dimers.

It is found in the cytoplasm. It carries out the reaction 3-amino-2-oxopropyl phosphate + 1-deoxy-D-xylulose 5-phosphate = pyridoxine 5'-phosphate + phosphate + 2 H2O + H(+). It participates in cofactor biosynthesis; pyridoxine 5'-phosphate biosynthesis; pyridoxine 5'-phosphate from D-erythrose 4-phosphate: step 5/5. In terms of biological role, catalyzes the complicated ring closure reaction between the two acyclic compounds 1-deoxy-D-xylulose-5-phosphate (DXP) and 3-amino-2-oxopropyl phosphate (1-amino-acetone-3-phosphate or AAP) to form pyridoxine 5'-phosphate (PNP) and inorganic phosphate. The sequence is that of Pyridoxine 5'-phosphate synthase from Trichormus variabilis (strain ATCC 29413 / PCC 7937) (Anabaena variabilis).